Reading from the N-terminus, the 408-residue chain is DNA-directed RNA polymerase subunit Rpo1C (408 aa).

The protein belongs to the RNA polymerase beta' chain family. As to quaternary structure, part of the RNA polymerase complex.

It localises to the cytoplasm. The enzyme catalyses RNA(n) + a ribonucleoside 5'-triphosphate = RNA(n+1) + diphosphate. In terms of biological role, DNA-dependent RNA polymerase (RNAP) catalyzes the transcription of DNA into RNA using the four ribonucleoside triphosphates as substrates. Forms part of the jaw domain. The polypeptide is DNA-directed RNA polymerase subunit Rpo1C (Methanosarcina mazei (strain ATCC BAA-159 / DSM 3647 / Goe1 / Go1 / JCM 11833 / OCM 88) (Methanosarcina frisia)).